Reading from the N-terminus, the 223-residue chain is Charged multivesicular body protein 3 (223 aa).

A lipid anchor (N-myristoyl glycine) is attached at Gly2. The interval 2–113 is intramolecular interaction with C-terminus; sequence GLFGKTQEKP…LQKSTEVMKA (112 aa). Residues 22–54 are a coiled coil; sequence KIRKEMRVVDRQIRDIQREEEKVKRSVKDAAKK. Important for autoinhibitory function regions lie at residues 59 to 64 and 168 to 169; these read VCVVLA and IL. Positions 149–223 form a coiled coil; that stretch reads ESMDDQEEME…MQSRLATLRS (75 aa). An intramolecular interaction with N-terminus region spans residues 151–221; the sequence is MDDQEEMEEA…EAMQSRLATL (71 aa). Residues 151–223 are interaction with VPS4A; that stretch reads MDDQEEMEEA…MQSRLATLRS (73 aa). Residue Lys179 forms a Glycyl lysine isopeptide (Lys-Gly) (interchain with G-Cter in ubiquitin) linkage. Positions 180-223 are disordered; sequence APSKVTDALPEPEPAGAMAASEGDEEDDEEDLEAMQSRLATLRS. Interaction with STAMBP regions lie at residues 196–223, 204–208, and 222–223; these read AMAA…TLRS, EEDDE, and RS. Ser200 is modified (phosphoserine). Positions 201–212 match the MIT-interacting motif motif; sequence EGDEEDDEEDLE. The segment covering 201 to 212 has biased composition (acidic residues); that stretch reads EGDEEDDEEDLE.

Belongs to the SNF7 family. As to quaternary structure, probable core component of the endosomal sorting required for transport complex III (ESCRT-III). ESCRT-III components are thought to multimerize to form a flat lattice on the perimeter membrane of the endosome. Several assembly forms of ESCRT-III may exist that interact and act sequentially. Forms a metastable monomer in solution; its core structure (without part of the putative autoinhibitory C-terminal acidic region) oligomerizes into a flat lattice via two different dimerization interfaces. In vitro, heteromerizes with CHMP2A (but not CHMP4) to form helical tubular structures that expose membrane-interacting sites on the outside whereas VPS4B can associate on the inside of the tubule. May interact with IGFBP7; the relevance of such interaction however remains unclear. Interacts with CHMP2A. Interacts with CHMP4A; the interaction requires the release of CHMP4A autoinhibition. Interacts with VPS4A. Interacts with STAMBP; the interaction appears to relieve the autoinhibition of CHMP3. Interacts with VTA1.

Its subcellular location is the cytoplasm. The protein localises to the cytosol. The protein resides in the membrane. It is found in the endosome. It localises to the late endosome membrane. Its function is as follows. Probable core component of the endosomal sorting required for transport complex III (ESCRT-III) which is involved in multivesicular bodies (MVBs) formation and sorting of endosomal cargo proteins into MVBs. MVBs contain intraluminal vesicles (ILVs) that are generated by invagination and scission from the limiting membrane of the endosome and mostly are delivered to lysosomes enabling degradation of membrane proteins, such as stimulated growth factor receptors, lysosomal enzymes and lipids. The MVB pathway appears to require the sequential function of ESCRT-O, -I,-II and -III complexes. ESCRT-III proteins mostly dissociate from the invaginating membrane before the ILV is released. The ESCRT machinery also functions in topologically equivalent membrane fission events, such as the terminal stages of cytokinesis. ESCRT-III proteins are believed to mediate the necessary vesicle extrusion and/or membrane fission activities, possibly in conjunction with the AAA ATPase VPS4. Selectively binds to phosphatidylinositol 3,5-bisphosphate PtdIns(3,5)P2 and PtdIns(3,4)P2 in preference to other phosphoinositides tested. Involved in late stages of cytokinesis. Plays a role in endosomal sorting/trafficking of EGF receptor. This is Charged multivesicular body protein 3 (Chmp3) from Rattus norvegicus (Rat).